Consider the following 521-residue polypeptide: Cytoplasmic polyadenylation element-binding protein 2 (521 aa).

Pro residues predominate over residues 1 to 11 (MNLPQQQPPAA). Disordered regions lie at residues 1–35 (MNLP…QAAA) and 50–88 (PLLK…NMGI). Positions 12 to 35 (APQQPQSRRSPVSPQLQQQHQAAA) are enriched in low complexity. S21 is subject to Phosphoserine. A compositionally biased stretch (polar residues) spans 55 to 70 (SPWSNHQNSGWGTASM). 2 consecutive RRM domains span residues 264 to 355 (RKVF…PWNL) and 372 to 454 (KTIF…PYVL).

The protein belongs to the RRM CPEB family. As to quaternary structure, interacts with TENT2/GLD2. In terms of tissue distribution, expressed in embryo, cerebellum, salivary gland, thymus, heart, liver, lung, spleen, kidney, intestine, ovary and round spermatids. Weakly expressed in granular cells of dentate gyrus and the pyramidal cells of CA3 and CA1 of the hippocampus.

It is found in the cytoplasm. Its function is as follows. May play a role in translational regulation of stored mRNAs in transcriptionally inactive haploid spermatids. Binds to poly(U) RNA oligomers. Required for cell cycle progression, specifically for the transition from metaphase to anaphase. The polypeptide is Cytoplasmic polyadenylation element-binding protein 2 (Cpeb2) (Mus musculus (Mouse)).